The sequence spans 203 residues: LexA repressor (203 aa).

A DNA-binding region (H-T-H motif) is located at residues V30 to K50. Active-site for autocatalytic cleavage activity residues include S127 and K164.

This sequence belongs to the peptidase S24 family. Homodimer.

It carries out the reaction Hydrolysis of Ala-|-Gly bond in repressor LexA.. Its function is as follows. Represses a number of genes involved in the response to DNA damage (SOS response), including recA and lexA. In the presence of single-stranded DNA, RecA interacts with LexA causing an autocatalytic cleavage which disrupts the DNA-binding part of LexA, leading to derepression of the SOS regulon and eventually DNA repair. In Clostridium perfringens (strain ATCC 13124 / DSM 756 / JCM 1290 / NCIMB 6125 / NCTC 8237 / Type A), this protein is LexA repressor.